A 318-amino-acid polypeptide reads, in one-letter code: Ribose-phosphate pyrophosphokinase 3 (318 aa).

96–101 (RQDKKD) provides a ligand contact to ATP. Mg(2+)-binding residues include aspartate 128, histidine 130, aspartate 139, and aspartate 143. Histidine 130 contributes to the ATP binding site. Residues 212-227 (NDRVAILVDDMADTCV) are binding of phosphoribosylpyrophosphate.

This sequence belongs to the ribose-phosphate pyrophosphokinase family. Homodimer. The active form is probably a hexamer composed of 3 homodimers. It depends on Mg(2+) as a cofactor. Testis.

The catalysed reaction is D-ribose 5-phosphate + ATP = 5-phospho-alpha-D-ribose 1-diphosphate + AMP + H(+). It functions in the pathway metabolic intermediate biosynthesis; 5-phospho-alpha-D-ribose 1-diphosphate biosynthesis; 5-phospho-alpha-D-ribose 1-diphosphate from D-ribose 5-phosphate (route I): step 1/1. Its activity is regulated as follows. Activated by magnesium and inorganic phosphate. Its function is as follows. Catalyzes the synthesis of phosphoribosylpyrophosphate (PRPP) that is essential for nucleotide synthesis. This chain is Ribose-phosphate pyrophosphokinase 3 (PRPS1L1), found in Homo sapiens (Human).